A 366-amino-acid chain; its full sequence is UPF0324 membrane protein RSc1111 (366 aa).

8 consecutive transmembrane segments (helical) span residues 21 to 43 (LAGAGLLAGCAGVAMIAGATAWA), 103 to 125 (LGASGVVIPLLVLAATMLSGAWV), 137 to 159 (AVLVAAGSAVCGAAAVLAVAPAV), 169 to 191 (AIASVVLFGTAGIFLYPWLYALA), 198 to 220 (VAPAHFGVYIGSTLHEVAQVIAA), 240 to 262 (VLALAPLLVVLACTMPAEGLVLE), 283 to 305 (WFAAGLLGVALLNSGGAIPATWH), and 343 to 365 (AGVLWVGLVAGGAAINAGVRWLA).

The protein belongs to the UPF0324 family.

Its subcellular location is the cell membrane. This Ralstonia nicotianae (strain ATCC BAA-1114 / GMI1000) (Ralstonia solanacearum) protein is UPF0324 membrane protein RSc1111.